Here is a 348-residue protein sequence, read N- to C-terminus: Anthranilate phosphoribosyltransferase (348 aa).

5-phospho-alpha-D-ribose 1-diphosphate contacts are provided by residues Gly89, 92–93, Thr97, 99–102, 117–125, and Ser129; these read GD, NIST, and KHGNRSASS. Gly89 serves as a coordination point for anthranilate. Mg(2+) is bound at residue Ser101. Asn120 contacts anthranilate. Arg175 is a binding site for anthranilate. Mg(2+) is bound by residues Asp234 and Glu235.

Belongs to the anthranilate phosphoribosyltransferase family. As to quaternary structure, homodimer. Mg(2+) serves as cofactor.

It catalyses the reaction N-(5-phospho-beta-D-ribosyl)anthranilate + diphosphate = 5-phospho-alpha-D-ribose 1-diphosphate + anthranilate. The protein operates within amino-acid biosynthesis; L-tryptophan biosynthesis; L-tryptophan from chorismate: step 2/5. In terms of biological role, catalyzes the transfer of the phosphoribosyl group of 5-phosphorylribose-1-pyrophosphate (PRPP) to anthranilate to yield N-(5'-phosphoribosyl)-anthranilate (PRA). The chain is Anthranilate phosphoribosyltransferase from Synechocystis sp. (strain ATCC 27184 / PCC 6803 / Kazusa).